A 429-amino-acid chain; its full sequence is Adenylosuccinate synthetase (429 aa).

Residues G13–K19 and G41–T43 each bind GTP. D14 functions as the Proton acceptor in the catalytic mechanism. D14 and G41 together coordinate Mg(2+). Residues D14–K17, N39–H42, T130, R144, Q225, T240, and R304 contribute to the IMP site. H42 serves as the catalytic Proton donor. A300–R306 is a substrate binding site. GTP is bound by residues R306, K332 to D334, and S413 to G415.

The protein belongs to the adenylosuccinate synthetase family. Homodimer. Mg(2+) serves as cofactor.

The protein localises to the cytoplasm. The enzyme catalyses IMP + L-aspartate + GTP = N(6)-(1,2-dicarboxyethyl)-AMP + GDP + phosphate + 2 H(+). Its pathway is purine metabolism; AMP biosynthesis via de novo pathway; AMP from IMP: step 1/2. Functionally, plays an important role in the de novo pathway of purine nucleotide biosynthesis. Catalyzes the first committed step in the biosynthesis of AMP from IMP. The chain is Adenylosuccinate synthetase from Pseudomonas fluorescens (strain Pf0-1).